The sequence spans 370 residues: Acyl-CoA:lysophosphatidylglycerol acyltransferase 1 (370 aa).

A helical membrane pass occupies residues 22–42 (FAFMVANNLVAIPSYICYVII). The HXXXXD motif signature appears at 101–106 (HQATGD). The chain crosses the membrane as a helical span at residues 342-362 (MWIFLIQSFAFLSGYLWYHII).

Belongs to the 1-acyl-sn-glycerol-3-phosphate acyltransferase family. In terms of tissue distribution, ubiquitous. Expressed in heart, kidney, liver, skin, intestine, and thymus. Highest expression is detected in brain and testis.

Its subcellular location is the endoplasmic reticulum membrane. The enzyme catalyses a 2-acyl-sn-glycero-3-phosphoethanolamine + octadecanoyl-CoA = 1-octadecanoyl-2-acyl-sn-glycero-3-phosphoethanolamine + CoA. It carries out the reaction 2-(9Z-octadecenoyl)-sn-glycero-3-phosphoethanolamine + octadecanoyl-CoA = 1-octadecanoyl-2-(9Z-octadecenoyl)-sn-glycero-3-phosphoethanolamine + CoA. The catalysed reaction is a 2-acyl-sn-glycero-3-phosphoethanolamine + hexadecanoyl-CoA = 1-hexadecanoyl-2-acyl-sn-glycero-3-phosphoethanolamine + CoA. It catalyses the reaction 2-(9Z-octadecenoyl)-sn-glycero-3-phosphoethanolamine + hexadecanoyl-CoA = 1-hexadecanoyl-2-(9Z-octadecenoyl)-sn-glycero-3-phosphoethanolamine + CoA. The enzyme catalyses 1-tetradecanoyl-sn-glycero-3-phospho-(1'-sn-glycerol) + hexadecanoyl-CoA = 1-tetradecanoyl-2-hexadecanoyl-sn-glycero-3-phospho-(1'-sn-glycerol) + CoA. It carries out the reaction 1-hexadecanoyl-sn-glycero-3-phospho-(1'-sn-glycerol) + dodecanoyl-CoA = 1-hexadecanoyl-2-dodecanoyl-sn-glycero-3-phospho-(1'-sn-glycerol) + CoA. The catalysed reaction is 1-hexadecanoyl-sn-glycero-3-phospho-(1'-sn-glycerol) + hexadecanoyl-CoA = 1,2-dihexadecanoyl-sn-glycero-3-phospho-(1'-sn-glycerol) + CoA. It catalyses the reaction 1-hexadecanoyl-sn-glycero-3-phospho-(1'-sn-glycerol) + octadecanoyl-CoA = 1-hexadecanoyl-2-octadecanoyl-sn-glycero-3-phospho-(1'-sn-glycerol) + CoA. The enzyme catalyses 1-octadecanoyl-sn-glycero-3-phospho-(1'-sn-glycerol) + hexadecanoyl-CoA = 1-octadecanoyl-2-hexadecanoyl-sn-glycero-3-phospho-(1'-sn-glycerol) + CoA. It carries out the reaction 1-(9Z-octadecenoyl)-sn-glycero-3-phospho-(1'-sn-glycerol) + dodecanoyl-CoA = 1-(9Z-octadecenoyl)-2-dodecanoyl-sn-glycero-3-phospho-(1'-sn-glycerol) + CoA. The catalysed reaction is 1-hexadecanoyl-sn-glycero-3-phospho-(1'-sn-glycerol) + (9Z)-octadecenoyl-CoA = 1-hexadecanoyl-2-(9Z-octadecenoyl)-sn-glycero-3-phospho-(1'-sn-glycerol) + CoA. It catalyses the reaction 1-(9Z-octadecenoyl)-sn-glycero-3-phospho-(1'-sn-glycerol) + hexadecanoyl-CoA = 1-(9Z-octadecenoyl)-2-hexadecanoyl-sn-glycero-3-phospho-(1'-sn-glycerol) + CoA. The enzyme catalyses 1-(9Z-octadecenoyl)-sn-glycero-3-phospho-(1'-sn-glycerol) + (9Z)-octadecenoyl-CoA = 1,2-di-(9Z-octadecenoyl)-sn-glycero-3-phospho-(1'-sn-glycerol) + CoA. It carries out the reaction a 2-acylglycerol + an acyl-CoA = a 1,2-diacylglycerol + CoA. The catalysed reaction is a 2-acylglycerol + hexadecanoyl-CoA = a 1-hexadecanoyl-2-acylglycerol + CoA. It catalyses the reaction a 1-acylglycerol + hexadecanoyl-CoA = an hexadecanoyl-acylglycerol + CoA. The enzyme catalyses a 2-acyl-sn-glycero-3-phosphocholine + an acyl-CoA = a 1,2-diacyl-sn-glycero-3-phosphocholine + CoA. It carries out the reaction 2-(9Z-octadecenoyl)-sn-glycero-3-phosphocholine + octadecanoyl-CoA = 1-octadecanoyl-2-(9Z-octadecenoyl)-sn-glycero-3-phosphocholine + CoA. The catalysed reaction is 2-(9Z,12Z-octadecadienoyl)-sn-glycero-3-phosphocholine + octadecanoyl-CoA = 1-octadecanoyl-2-(9Z,12Z)-octadecadienoyl-sn-glycero-3-phosphocholine + CoA. It catalyses the reaction 2-(5Z,8Z,11Z,14Z)-eicosatetraenoyl-sn-glycero-3-phosphocholine + octadecanoyl-CoA = 1-octadecanoyl-2-(5Z,8Z,11Z,14Z-eicosatetraenoyl)-sn-glycero-3-phosphocholine + CoA. The enzyme catalyses 2-(9Z-octadecenoyl)-sn-glycero-3-phosphocholine + hexadecanoyl-CoA = 1-hexadecanoyl-2-(9Z-octadecenoyl)-sn-glycero-3-phosphocholine + CoA. It carries out the reaction 2-(9Z-octadecenoyl)-sn-glycero-3-phospho-L-serine + hexadecanoyl-CoA = 1-hexadecanoyl-2-(9Z-octadecenoyl)-sn-glycero-3-phospho-L-serine + CoA. The catalysed reaction is 2-(4Z,7Z,10Z,13Z,16Z,19Z-docosahexaenoyl)-sn-glycero-3-phosphocholine + octadecanoyl-CoA = 1-octadecanoyl-2-(4Z,7Z,10Z,13Z,16Z,19Z-docosahexaenoyl)-sn-glycero-3-phosphocholine + CoA. It catalyses the reaction 1-(9Z-octadecenoyl)-sn-glycero-3-phospho-L-serine + octadecanoyl-CoA = 1-(9Z-octadecenoyl)-2-octadecanoyl-sn-glycero-3-phospho-L-serine + CoA. The enzyme catalyses a 2-acyl-sn-glycero-3-phosphoethanolamine + a fatty acyl-CoA = a 1,2-diacyl-sn-glycero-3-phosphoethanolamine + CoA. In terms of biological role, lysophospholipid acyltransferase involved in fatty acyl chain remodeling of glycerophospholipids in the endoplasmic reticulum membrane. Selectively catalyzes the transfer and esterification of saturated long-chain fatty acids from acyl-CoA to the sn-1 position of 1-lyso-2-acyl phosphatidylethanolamines (1-lyso-PE, LPE), with a preference for stearoyl CoA over palmitoyl CoA as acyl donor. Acts in concert with an unknown phospholipase A1 to convert palmitate PE species into stearate ones. Provides substrates to the PE methylation pathway, controlling stearate/palmitate composition of PE and phosphatidylcholine (PC) species with an overall impact on de novo hepatic lipid synthesis, body fat content and life span. Can acylate lysophosphatidylglycerols (LPG) using various saturated fatty acyl-CoAs as acyl donors. Can also acylate monoacylglycerols with a preference for 2-monoacylglycerols over 1-monoacylglycerols. Has no activity toward lysophosphatidic acids (LPA) and lysophosphatidylcholines (LPC). The chain is Acyl-CoA:lysophosphatidylglycerol acyltransferase 1 from Mus musculus (Mouse).